A 523-amino-acid chain; its full sequence is Volkensin (523 aa).

Residues Y74, Y113, E162, and R165 contribute to the active site. Position 111-113 (111-113) interacts with AMP; it reads GGY. Intrachain disulfides connect C245-C269 and C285-C304. Positions 251–265 are cleaved as a propeptide — linker peptide; sequence QSDSPLVIRSFVDRN. The Ricin B-type lectin 1 domain occupies 270–397; that stretch reads PSGETTAFIV…YAASQAWRVT (128 aa). A carbohydrate contacts are provided by residues 287-291, Q300, K305, and N311; that span reads DVKVE. C328 and C343 are joined by a disulfide. N358 and N398 together coordinate a carbohydrate. N-linked (GlcNAc...) asparagine glycans are attached at residues N358 and N398. Residues 400 to 523 enclose the Ricin B-type lectin 2 domain; sequence TVPTVTTIVG…HGNSNQQWFL (124 aa). 2 disulfides stabilise this stretch: C414/C427 and C453/C471.

This sequence in the N-terminal section; belongs to the ribosome-inactivating protein family. Type 2 RIP subfamily. Disulfide-linked dimer of A and B chains. In terms of processing, N-glycosylated. Contains mannose and galactose. As to expression, expressed in roots (at protein level). Expressed in seeds (at protein level).

It carries out the reaction Endohydrolysis of the N-glycosidic bond at one specific adenosine on the 28S rRNA.. With respect to regulation, hemagglutinating activity is inhibited by galactose and structurally related sugars. In terms of biological role, has N-glycosidase activity and is responsible for inhibiting protein synthesis through the catalytic inactivation of 60S ribosomal subunits by removing a specific adenine of 28S rRNA. Inhibits GTP-dependent binding of EF2 (elongation factor 2) to ribosomes. Binds to cell receptors and probably facilitates the entry into the cell of the A chain. Also acts as a galactose-specific lectin responsible for cell agglutination. The chain is Volkensin from Adenia volkensii (Kilyambiti plant).